The sequence spans 470 residues: ATP synthase subunit beta (470 aa).

157 to 164 (GGAGVGKT) lines the ATP pocket.

It belongs to the ATPase alpha/beta chains family. In terms of assembly, F-type ATPases have 2 components, CF(1) - the catalytic core - and CF(0) - the membrane proton channel. CF(1) has five subunits: alpha(3), beta(3), gamma(1), delta(1), epsilon(1). CF(0) has three main subunits: a(1), b(2) and c(9-12). The alpha and beta chains form an alternating ring which encloses part of the gamma chain. CF(1) is attached to CF(0) by a central stalk formed by the gamma and epsilon chains, while a peripheral stalk is formed by the delta and b chains.

It is found in the cell inner membrane. The enzyme catalyses ATP + H2O + 4 H(+)(in) = ADP + phosphate + 5 H(+)(out). Its function is as follows. Produces ATP from ADP in the presence of a proton gradient across the membrane. The catalytic sites are hosted primarily by the beta subunits. The polypeptide is ATP synthase subunit beta (Geobacter sp. (strain M21)).